A 161-amino-acid polypeptide reads, in one-letter code: 6,7-dimethyl-8-ribityllumazine synthase (161 aa).

5-amino-6-(D-ribitylamino)uracil contacts are provided by residues tryptophan 31, 63–65 (SFE), and 85–87 (VVI). 90–91 (GT) lines the (2S)-2-hydroxy-3-oxobutyl phosphate pocket. Histidine 93 acts as the Proton donor in catalysis. 5-amino-6-(D-ribitylamino)uracil is bound at residue phenylalanine 118. Position 132 (arginine 132) interacts with (2S)-2-hydroxy-3-oxobutyl phosphate.

It belongs to the DMRL synthase family.

The catalysed reaction is (2S)-2-hydroxy-3-oxobutyl phosphate + 5-amino-6-(D-ribitylamino)uracil = 6,7-dimethyl-8-(1-D-ribityl)lumazine + phosphate + 2 H2O + H(+). The protein operates within cofactor biosynthesis; riboflavin biosynthesis; riboflavin from 2-hydroxy-3-oxobutyl phosphate and 5-amino-6-(D-ribitylamino)uracil: step 1/2. Functionally, catalyzes the formation of 6,7-dimethyl-8-ribityllumazine by condensation of 5-amino-6-(D-ribitylamino)uracil with 3,4-dihydroxy-2-butanone 4-phosphate. This is the penultimate step in the biosynthesis of riboflavin. This Pseudarthrobacter chlorophenolicus (strain ATCC 700700 / DSM 12829 / CIP 107037 / JCM 12360 / KCTC 9906 / NCIMB 13794 / A6) (Arthrobacter chlorophenolicus) protein is 6,7-dimethyl-8-ribityllumazine synthase.